The sequence spans 489 residues: UDP-N-acetylmuramate--L-alanine ligase (489 aa).

An ATP-binding site is contributed by Gly-128–Thr-134.

The protein belongs to the MurCDEF family.

Its subcellular location is the cytoplasm. The enzyme catalyses UDP-N-acetyl-alpha-D-muramate + L-alanine + ATP = UDP-N-acetyl-alpha-D-muramoyl-L-alanine + ADP + phosphate + H(+). Its pathway is cell wall biogenesis; peptidoglycan biosynthesis. Cell wall formation. The sequence is that of UDP-N-acetylmuramate--L-alanine ligase from Shewanella halifaxensis (strain HAW-EB4).